Here is a 415-residue protein sequence, read N- to C-terminus: Probable glucuronosyltransferase Os01g0926600 (415 aa).

Residues 1–4 (MAMR) are Cytoplasmic-facing. The helical; Signal-anchor for type II membrane protein transmembrane segment at 5 to 25 (LSSAAVALALLLAATALEDVA) threads the bilayer. The Lumenal segment spans residues 26–415 (RGQDTERIEG…QGPVGDLKPW (390 aa)). N-linked (GlcNAc...) asparagine glycosylation is found at Asn142 and Asn403.

Belongs to the glycosyltransferase 47 family.

The protein resides in the golgi apparatus membrane. Involved in the synthesis of glucuronoxylan hemicellulose in secondary cell walls. The polypeptide is Probable glucuronosyltransferase Os01g0926600 (Oryza sativa subsp. japonica (Rice)).